A 428-amino-acid chain; its full sequence is Enolase (428 aa).

Residue Q163 participates in (2R)-2-phosphoglycerate binding. E205 (proton donor) is an active-site residue. Mg(2+)-binding residues include D242, E285, and D312. 4 residues coordinate (2R)-2-phosphoglycerate: K337, R366, S367, and K388. K337 (proton acceptor) is an active-site residue.

Belongs to the enolase family. Requires Mg(2+) as cofactor.

The protein localises to the cytoplasm. Its subcellular location is the secreted. It is found in the cell surface. It catalyses the reaction (2R)-2-phosphoglycerate = phosphoenolpyruvate + H2O. It functions in the pathway carbohydrate degradation; glycolysis; pyruvate from D-glyceraldehyde 3-phosphate: step 4/5. In terms of biological role, catalyzes the reversible conversion of 2-phosphoglycerate (2-PG) into phosphoenolpyruvate (PEP). It is essential for the degradation of carbohydrates via glycolysis. This is Enolase from Neisseria meningitidis serogroup B (strain ATCC BAA-335 / MC58).